The following is an 805-amino-acid chain: Transcription factor E2f1 (805 aa).

3 disordered regions span residues 9–45, 119–208, and 224–255; these read APIN…TTGH, AAAA…LRHD, and PASH…RNRA. 2 stretches are compositionally biased toward low complexity: residues 12 to 37 and 119 to 134; these read NNSN…QQHY and AAAA…QLQQ. 2 stretches are compositionally biased toward polar residues: residues 144–154 and 181–195; these read RKATGKSNDIT and HHQT…SSAP. The short motif at 147–161 is the PIP-box K+4 motif element; the sequence is TGKSNDITNYYKVKR. A compositionally biased stretch (low complexity) spans 240-249; that stretch reads AASVASSSSS. Residues 253–318 mediate DNA binding; the sequence is NRADTSLGIL…KKSKNNIQWR (66 aa). Residues 318 to 411 are dimerization; sequence RCGQSMVSQE…LPNTKLPREI (94 aa). Serine 434 carries the post-translational modification Phosphoserine. Disordered regions lie at residues 578–650 and 714–743; these read SLTE…QRRS and GAGA…DANS. Composition is skewed to low complexity over residues 595–615 and 623–636; these read AAAA…NSHN and SNHS…NSKS. Polar residues predominate over residues 637–647; that stretch reads QPPTIGYGSSQ.

It belongs to the E2F/DP family. Heterodimer of E2f and Dp. Cooperates to give sequence-specific DNA binding and optimal trans-activation. Interacts with PCNA. Post-translationally, ubiquitinated by the DCX(DTL) complex, also named CRL4(CDT2) complex, leading to its degradation during S phase. Ubiquitination by the DCX(DTL) complex is essential for cell cycle control and is PCNA-dependent: interacts with PCNA via its PIP-box, while the presence of the containing the 'K+4' motif in the PIP box, recruit the DCX(DTL) complex, leading to its degradation. As to expression, segmentally repeated expression throughout early embryos is restricted to the ventral nerve cord in later embryos.

It localises to the nucleus. Its function is as follows. Transcriptional activator that binds to E2f sites. Required for wild-type growth in mitotic and polytene tissues, Contributes to the expression of replication genes at the G1-S transition and Cyclin E. Activates cell proliferation in wing imaginal disk, which requires expression of vg. The sequence is that of Transcription factor E2f1 from Drosophila melanogaster (Fruit fly).